A 1136-amino-acid polypeptide reads, in one-letter code: Rho GTPase-activating protein 45 (1136 aa).

2 disordered regions span residues 1–73 and 91–110; these read MFSR…RHAS and HRSP…GAGP. Phosphoserine is present on residues serine 23, serine 25, serine 73, serine 93, and serine 99. Residues 269–539 enclose the F-BAR domain; it reads EEVDVLLQRC…SSKLYDPGQQ (271 aa). Coiled-coil stretches lie at residues 376–412 and 440–499; these read EHEK…YVQR and TATK…RQSD. Phosphoserine is present on residues serine 569, serine 578, serine 592, and serine 619. A disordered region spans residues 583–662; sequence DVARPEAAGS…SSTEELVDPD (80 aa). Residues 646-655 are compositionally biased toward low complexity; that stretch reads TSSSGTMSST. The segment at 702-747 adopts a Phorbol-ester/DAG-type zinc-finger fold; it reads THRLRKLRTPAKCRECNSYVYFQGAECEECCLACHKKCLETLAIQC. In terms of domain architecture, Rho-GAP spans 761-974; it reads QDFSHAARSA…TLIVHYGLVF (214 aa). Residues serine 949, serine 1027, serine 1030, and serine 1032 each carry the phosphoserine modification. The interval 1061–1136 is disordered; the sequence is EASLEVASGS…SCRERQPEFV (76 aa). The segment covering 1095–1109 has biased composition (polar residues); it reads QQLSGFNTNQSNNVL.

In terms of assembly, HA-1 forms a complex with MHC class I HLA-A*0201. In terms of tissue distribution, expressed on cells of the hematopoietic lineage. Detected in dendritic cells and epidermal Langerhans cells. Expressed in peripheral blood mononuclear cells, in all leukemia/lymphoma cell lines. Detected also in some solid tumors and tissues such as cancerous and non-cancerous tissue.

The protein localises to the cytoplasm. The protein resides in the cell projection. It localises to the ruffle membrane. Functionally, contains a GTPase activator for the Rho-type GTPases (RhoGAP) domain that would be able to negatively regulate the actin cytoskeleton as well as cell spreading. However, also contains N-terminally a BAR-domin which is able to play an autoinhibitory effect on this RhoGAP activity. In terms of biological role, precursor of the histocompatibility antigen HA-1. More generally, minor histocompatibility antigens (mHags) refer to immunogenic peptide which, when complexed with MHC, can generate an immune response after recognition by specific T-cells. The peptides are derived from polymorphic intracellular proteins, which are cleaved by normal pathways of antigen processing. The binding of these peptides to MHC class I or class II molecules and its expression on the cell surface can stimulate T-cell responses and thereby trigger graft rejection or graft-versus-host disease (GVHD) after hematopoietic stem cell transplantation from HLA-identical sibling donor. GVHD is a frequent complication after bone marrow transplantation (BMT), due to mismatch of minor histocompatibility antigen in HLA-matched sibling marrow transplants. Specifically, mismatching for mHag HA-1 which is recognized as immunodominant, is shown to be associated with the development of severe GVHD after HLA-identical BMT. HA-1 is presented to the cell surface by MHC class I HLA-A*0201, but also by other HLA-A alleles. This complex specifically elicits donor-cytotoxic T-lymphocyte (CTL) reactivity against hematologic malignancies after treatment by HLA-identical allogenic BMT. It induces cell recognition and lysis by CTL. The protein is Rho GTPase-activating protein 45 of Homo sapiens (Human).